Reading from the N-terminus, the 510-residue chain is P-(S)-hydroxymandelonitrile lyase (510 aa).

Residues 1-34 (MAVFISSSGSPGRATATTTTTTTLLLAVLAAAAA) form the signal peptide. 116–118 (NGG) contacts substrate. Disulfide bonds link Cys121/Cys377, Cys277/Cys289, and Cys313/Cys344. A glycan (N-linked (GlcNAc...) asparagine) is linked at Asn172. Residue 212-213 (ES) participates in substrate binding. Ser213 is an active-site residue. N-linked (GlcNAc...) asparagine glycosylation is present at Asn365. Active-site residues include Asp414 and His469. Residue 465-469 (SGAGH) coordinates substrate.

The protein belongs to the peptidase S10 family. As to quaternary structure, heterotetramer of two A and two B chains. The A and B chains are linked by a disulfide bond. Post-translationally, the N-terminus of chain A is blocked. In terms of tissue distribution, primary leaves of seedlings.

It catalyses the reaction (S)-4-hydroxymandelonitrile = 4-hydroxybenzaldehyde + hydrogen cyanide. Involved in cyanogenesis, the release of HCN from injured tissues. Is involved in the catabolism of the cyanogenic glycoside dhurrin. This Sorghum bicolor (Sorghum) protein is P-(S)-hydroxymandelonitrile lyase.